We begin with the raw amino-acid sequence, 314 residues long: tRNA pseudouridine synthase B (314 aa).

The Nucleophile role is filled by Asp47.

It belongs to the pseudouridine synthase TruB family. Type 1 subfamily.

It carries out the reaction uridine(55) in tRNA = pseudouridine(55) in tRNA. Its function is as follows. Responsible for synthesis of pseudouridine from uracil-55 in the psi GC loop of transfer RNAs. This is tRNA pseudouridine synthase B from Vibrio vulnificus (strain CMCP6).